The following is a 470-amino-acid chain: MKINSPLEAYKYLPQTNCGECGQPTCMAFASTLIDRSGKTTDCPPLIKEKKFAKKLAELDRLLAPEIRQVTIGVGERAANIGGDDVLYRHKLTFFNKTKMFFDVADNMDEAAIVERVKKISDYKKFYVGRNLLLDGVAIRAASNDPAKFATAVKKVIENTELPVILCSFNPAVLKAGLEVAKGKNPLLYAANKDNWKEVGELALEYNVPVVVSAFNDLDGLKTLAKTFAEAGIKDIVLDPGTYPTGKGLKDTFTNFLKIRRAGIMGDTEIAYPIMAMPLTAWMAGIADPVSASYWETVLASIFTIRYGDIMLLHSMEPYATMPEVHLAETIYTDPRSPVAVDSKMYKVGNPTADSPVLFTTNFALTYYTVESDLASNGIDCWLLAVNTDGIGVEAAAAGGQLTADKVKDAFEKSGFDLKSDVTHNSVVIPGLAARLQGDIEDKLNVKVMVGPMDSGRLPGWMEKNWPPKK.

One can recognise a 4Fe-4S domain in the interval 1-60; sequence MKINSPLEAYKYLPQTNCGECGQPTCMAFASTLIDRSGKTTDCPPLIKEKKFAKKLAELD. Positions 18, 21, 26, and 43 each coordinate [4Fe-4S] cluster.

In terms of assembly, heterodimer of delta and gamma chains. The ACDS complex is made up of alpha, epsilon, beta, gamma and delta chains with a probable stoichiometry of (alpha(2)epsilon(2))(4)-beta(8)-(gamma(1)delta(1))(8). Corrinoid is required as a cofactor. It depends on [4Fe-4S] cluster as a cofactor.

It catalyses the reaction 5,6,7,8-tetrahydrosarcinapterin + methyl-Co(III)-[corrinoid Fe-S protein] = 5-methyltetrahydrosarcinapterin + Co(I)-[corrinoid Fe-S protein] + H(+). It functions in the pathway one-carbon metabolism; methanogenesis from acetate. In terms of biological role, part of a complex that catalyzes the reversible cleavage of acetyl-CoA, allowing growth on acetate as sole source of carbon and energy. The sequence is that of Acetyl-CoA decarbonylase/synthase complex subunit gamma 1 from Methanosarcina mazei (strain ATCC BAA-159 / DSM 3647 / Goe1 / Go1 / JCM 11833 / OCM 88) (Methanosarcina frisia).